The primary structure comprises 470 residues: Poly(A) polymerase catalytic subunit (470 aa).

Catalysis depends on residues Asp-192 and Asp-194.

The protein belongs to the poxviridae poly(A) polymerase catalytic subunit family. In terms of assembly, heterodimer of a large (catalytic) subunit and a small (regulatory) subunit.

It catalyses the reaction RNA(n) + ATP = RNA(n)-3'-adenine ribonucleotide + diphosphate. Functionally, polymerase that creates the 3'-poly(A) tail of mRNA's. This chain is Poly(A) polymerase catalytic subunit (PAPL), found in Myxoma virus (strain Lausanne) (MYXV).